Consider the following 557-residue polypeptide: D-arabinono-1,4-lactone oxidase (557 aa).

An FAD-binding PCMH-type domain is found at 25 to 209; it reads FLCKPQAIFQ…THVTLRTCPK (185 aa). Residues 58-61, 62-63, 144-148, isoleucine 199, and 543-546 contribute to the FAD site; these read VGSG, HS, ISTGT, and LSGK. Histidine 62 bears the Pros-8alpha-FAD histidine mark.

It belongs to the oxygen-dependent FAD-linked oxidoreductase family. It depends on FAD as a cofactor.

The catalysed reaction is D-arabinono-1,4-lactone + O2 = dehydro-D-arabinono-1,4-lactone + H2O2 + H(+). The enzyme catalyses L-galactono-1,4-lactone + O2 = L-ascorbate + H2O2 + H(+). It carries out the reaction L-gulono-1,4-lactone + O2 = L-ascorbate + H2O2 + H(+). It catalyses the reaction L-xylono-1,4-lactone + O2 = dehydro-L-arabinono-1,4-lactone + H2O2 + H(+). It functions in the pathway cofactor biosynthesis; D-erythroascorbate biosynthesis; dehydro-D-arabinono-1,4-lactone from D-arabinose: step 2/2. In terms of biological role, D-arabinono-1,4-lactone oxidase that catalyzes the final step of biosynthesis of D-erythroascorbic acid, an important antioxidant and one of the virulence factors enhancing the pathogenicity. Is also able to oxidize L-galactono-1,4-lactone, L-xylono-1,4-lactone and L-gulono-1,4-lactone. In Candida albicans (strain SC5314 / ATCC MYA-2876) (Yeast), this protein is D-arabinono-1,4-lactone oxidase.